Consider the following 86-residue polypeptide: Muscarinic toxin 7 (86 aa).

The first 21 residues, 1-21 (MKTLLLTLVVVTIVCLDLGYT), serve as a signal peptide directing secretion. Finger loop stretches follow at residues 23–37 (TCVK…TSED), 44–63 (LCFK…TRGC), and 66–78 (TCPK…VINC). Cystine bridges form between Cys24–Cys45, Cys38–Cys63, Cys67–Cys78, and Cys79–Cys84.

The protein belongs to the three-finger toxin family. Short-chain subfamily. Aminergic toxin sub-subfamily. As to expression, expressed by the venom gland.

The protein localises to the secreted. Functionally, binds specifically and irreversibly to an allosteric site of the muscarinic acetylcholine M1 receptor (CHRM1) at subnanomolar concentrations and shows a very slow dissociation rate. It also inhibits agonist-mediated guanosine 5'-O-(3'-thiotriphosphate) (GTP-g-S) binding and downstream signaling, and decreases the dissociation rate of orthosteric antagonists (N-methylscopolamine (NMS) or pirenzepine). Is a potent negative allosteric modulator (NAM) for CHRM1 activation and a positive allosteric modulator (PAM) for antagonist binding. The protein is Muscarinic toxin 7 of Dendroaspis angusticeps (Eastern green mamba).